Here is a 219-residue protein sequence, read N- to C-terminus: MDADFWLDRWREGRTHFHQTRVTPLLQKYWPTLDVPAGGQVLVPLAGKSLDMVWLAGQGLRVLGVELSQLAVEQFFDENDLRPEIHQSAQGRHYVAGNLELICGDVFALEDATLAACAGVYDRAALVALPEPMRKRYAREVYGRLGRGCRGILITLDYPQDQMEGPPFSVDDAEVQALYAGHTEARLIDRRDILDKEPKFNQRGVARLDTLVYRLERLG.

Residues Trp10, Leu45, Glu66, and Arg123 each contribute to the S-adenosyl-L-methionine site.

The protein belongs to the class I-like SAM-binding methyltransferase superfamily. TPMT family.

The protein resides in the cytoplasm. It carries out the reaction S-adenosyl-L-methionine + a thiopurine = S-adenosyl-L-homocysteine + a thiopurine S-methylether.. This is Thiopurine S-methyltransferase from Bordetella pertussis (strain Tohama I / ATCC BAA-589 / NCTC 13251).